A 325-amino-acid polypeptide reads, in one-letter code: Protein TMED8 (325 aa).

The tract at residues 1–78 (MSDLQAAEGP…MVSPVSKDAT (78 aa)) is disordered. One can recognise a GOLD domain in the interval 159–323 (PPCIWTFAKV…NKTLYFHIYY (165 aa)). The residue at position 169 (Lys-169) is an N6-acetyllysine. Residues 232 to 267 (TVQVSDSSDDEDEEEEEEEEIEEPVPAGDVERGSRS) are disordered. The span at 238 to 254 (SSDDEDEEEEEEEEIEE) shows a compositional bias: acidic residues.

The sequence is that of Protein TMED8 (TMED8) from Homo sapiens (Human).